Here is a 349-residue protein sequence, read N- to C-terminus: 3-isopropylmalate dehydrogenase (349 aa).

Residues arginine 91, arginine 101, arginine 129, and aspartate 219 each contribute to the substrate site. Mg(2+) contacts are provided by aspartate 219, aspartate 243, and aspartate 247. Residue glycine 277–asparagine 289 participates in NAD(+) binding.

Belongs to the isocitrate and isopropylmalate dehydrogenases family. LeuB type 1 subfamily. In terms of assembly, homodimer. It depends on Mg(2+) as a cofactor. Mn(2+) is required as a cofactor.

The protein resides in the cytoplasm. The catalysed reaction is (2R,3S)-3-isopropylmalate + NAD(+) = 4-methyl-2-oxopentanoate + CO2 + NADH. It functions in the pathway amino-acid biosynthesis; L-leucine biosynthesis; L-leucine from 3-methyl-2-oxobutanoate: step 3/4. Functionally, catalyzes the oxidation of 3-carboxy-2-hydroxy-4-methylpentanoate (3-isopropylmalate) to 3-carboxy-4-methyl-2-oxopentanoate. The product decarboxylates to 4-methyl-2 oxopentanoate. The sequence is that of 3-isopropylmalate dehydrogenase from Zymomonas mobilis subsp. mobilis (strain ATCC 31821 / ZM4 / CP4).